The sequence spans 101 residues: NAD(P)H-quinone oxidoreductase subunit 4L, chloroplastic (101 aa).

Helical transmembrane passes span 2-22, 32-52, and 61-81; these read ILEHVLVLSAYLFSIGIYGLI, MCLELILNSVNLNFVTFSDFF, and IFSIFIIAIAAAEAAIGLAIV.

This sequence belongs to the complex I subunit 4L family. NDH is composed of at least 16 different subunits, 5 of which are encoded in the nucleus.

It is found in the plastid. The protein resides in the chloroplast thylakoid membrane. It catalyses the reaction a plastoquinone + NADH + (n+1) H(+)(in) = a plastoquinol + NAD(+) + n H(+)(out). The enzyme catalyses a plastoquinone + NADPH + (n+1) H(+)(in) = a plastoquinol + NADP(+) + n H(+)(out). In terms of biological role, NDH shuttles electrons from NAD(P)H:plastoquinone, via FMN and iron-sulfur (Fe-S) centers, to quinones in the photosynthetic chain and possibly in a chloroplast respiratory chain. The immediate electron acceptor for the enzyme in this species is believed to be plastoquinone. Couples the redox reaction to proton translocation, and thus conserves the redox energy in a proton gradient. The sequence is that of NAD(P)H-quinone oxidoreductase subunit 4L, chloroplastic from Oenothera argillicola (Appalachian evening primrose).